A 364-amino-acid chain; its full sequence is 4-hydroxythreonine-4-phosphate dehydrogenase (364 aa).

Residues His138 and Thr139 each coordinate substrate. 3 residues coordinate a divalent metal cation: His169, His214, and His269. Residues Lys277, Asn286, and Arg295 each coordinate substrate.

Belongs to the PdxA family. In terms of assembly, homodimer. The cofactor is a divalent metal cation.

It is found in the cytoplasm. The catalysed reaction is 4-(phosphooxy)-L-threonine + NAD(+) = 3-amino-2-oxopropyl phosphate + CO2 + NADH. It participates in cofactor biosynthesis; pyridoxine 5'-phosphate biosynthesis; pyridoxine 5'-phosphate from D-erythrose 4-phosphate: step 4/5. Its function is as follows. Catalyzes the NAD(P)-dependent oxidation of 4-(phosphooxy)-L-threonine (HTP) into 2-amino-3-oxo-4-(phosphooxy)butyric acid which spontaneously decarboxylates to form 3-amino-2-oxopropyl phosphate (AHAP). This Bacteroides thetaiotaomicron (strain ATCC 29148 / DSM 2079 / JCM 5827 / CCUG 10774 / NCTC 10582 / VPI-5482 / E50) protein is 4-hydroxythreonine-4-phosphate dehydrogenase.